Consider the following 598-residue polypeptide: mRNA-capping enzyme (598 aa).

The segment at methionine 1–proline 215 is TPase. The 159-residue stretch at leucine 25–alanine 183 folds into the Tyrosine-protein phosphatase domain. Cysteine 126 functions as the Phosphocysteine intermediate in the catalytic mechanism. Residues alanine 186–lysine 227 form a disordered region. A compositionally biased stretch (acidic residues) spans cysteine 193–glycine 206. Residues serine 207–serine 218 show a composition bias toward low complexity. The interval glycine 233–glutamine 598 is GTase. Lysine 298 serves as the catalytic N6-GMP-lysine intermediate. GTP-binding positions include arginine 303, arginine 319, aspartate 347–glutamate 349, lysine 462–lysine 464, and arginine 532–lysine 537. A disordered region spans residues arginine 575–glutamine 598.

In the N-terminal section; belongs to the non-receptor class of the protein-tyrosine phosphatase family. It in the C-terminal section; belongs to the eukaryotic GTase family.

It is found in the nucleus. It catalyses the reaction a 5'-end triphospho-ribonucleoside in mRNA + H2O = a 5'-end diphospho-ribonucleoside in mRNA + phosphate + H(+). It carries out the reaction a 5'-end diphospho-ribonucleoside in mRNA + GTP + H(+) = a 5'-end (5'-triphosphoguanosine)-ribonucleoside in mRNA + diphosphate. Its function is as follows. Bifunctional mRNA-capping enzyme exhibiting RNA 5'-triphosphate monophosphatase activity in the N-terminal part and mRNA guanylyltransferase activity in the C-terminal part. Catalyzes the first two steps of cap formation: by removing the gamma-phosphate from the 5'-triphosphate end of nascent mRNA to yield a diphosphate end, and by transferring the GMP moiety of GTP to the 5'-diphosphate terminus of RNA via a covalent enzyme-GMP reaction intermediate. The polypeptide is mRNA-capping enzyme (rngtt) (Danio rerio (Zebrafish)).